An 84-amino-acid polypeptide reads, in one-letter code: Acetylcholine receptor subunit alpha (84 aa).

2 cysteine pairs are disulfide-bonded: C7/C21 and C71/C72. N-linked (GlcNAc...) asparagine glycosylation occurs at N20.

This sequence belongs to the ligand-gated ion channel (TC 1.A.9) family. Acetylcholine receptor (TC 1.A.9.1) subfamily. Alpha-1/CHRNA1 sub-subfamily. In terms of assembly, one of the alpha chains that assemble within the acetylcholine receptor, a pentamer of two alpha chains, a beta, a delta, and a gamma (in immature muscle) or epsilon (in mature muscle) chains. The muscle heteropentamer composed of alpha-1, beta-1, delta, epsilon subunits interacts with the alpha-conotoxin ImII.

It is found in the postsynaptic cell membrane. Its subcellular location is the cell membrane. It carries out the reaction K(+)(in) = K(+)(out). The catalysed reaction is Na(+)(in) = Na(+)(out). Its function is as follows. Upon acetylcholine binding, the AChR responds by an extensive change in conformation that affects all subunits and leads to opening of an ion-conducting channel across the plasma membrane. The sequence is that of Acetylcholine receptor subunit alpha (CHRNA1) from Felis catus (Cat).